Reading from the N-terminus, the 129-residue chain is Lysozyme C (129 aa).

The C-type lysozyme domain maps to 1–129; the sequence is KVFGRCELAA…VHAWIRGCRL (129 aa). 4 disulfide bridges follow: Cys-6-Cys-127, Cys-30-Cys-115, Cys-64-Cys-80, and Cys-76-Cys-94. Catalysis depends on residues Glu-35 and Asp-52.

Belongs to the glycosyl hydrolase 22 family. Monomer.

It localises to the secreted. The enzyme catalyses Hydrolysis of (1-&gt;4)-beta-linkages between N-acetylmuramic acid and N-acetyl-D-glucosamine residues in a peptidoglycan and between N-acetyl-D-glucosamine residues in chitodextrins.. In terms of biological role, lysozymes have primarily a bacteriolytic function; those in tissues and body fluids are associated with the monocyte-macrophage system and enhance the activity of immunoagents. This Callipepla californica (California quail) protein is Lysozyme C (LYZ).